The sequence spans 169 residues: Signal peptidase complex subunit 1 (169 aa).

Topologically, residues 1 to 93 (MARGGDTGCT…QKLAEQMFQG (93 aa)) are cytoplasmic. The tract at residues 91-169 (FQGIILFSAI…RKIKRHAKNN (79 aa)) is (Microbial infection) Interaction with JEV NS2B. A helical transmembrane segment spans residues 94–114 (IILFSAIVGFIYGYVAEQFGW). The segment at 110 to 169 (EQFGWTVYIVMAGFAFSCLLTLPPWPIYRRHPLKWLPVQESSTDDKKPGERKIKRHAKNN) is (Microbial infection) Interaction with HCV NS2 and HCV E2. Residue Thr-115 is a topological domain, lumenal. A helical transmembrane segment spans residues 116–136 (VYIVMAGFAFSCLLTLPPWPI). The Cytoplasmic segment spans residues 137-169 (YRRHPLKWLPVQESSTDDKKPGERKIKRHAKNN). The interval 148 to 169 (QESSTDDKKPGERKIKRHAKNN) is disordered.

The protein belongs to the SPCS1 family. Component of the signal peptidase complex paralog A (SPC-A) composed of a catalytic subunit SEC11A and three accessory subunits SPCS1, SPCS2 and SPCS3. Component of the signal peptidase complex paralog C (SPC-C) composed of a catalytic subunit SEC11C and three accessory subunits SPCS1, SPCS2 and SPCS3. Within the complex, interacts with SPCS2 and SPCS3. The complex induces a local thinning of the ER membrane which is used to measure the length of the signal peptide (SP) h-region of protein substrates. This ensures the selectivity of the complex towards h-regions shorter than 18-20 amino acids. As to quaternary structure, (Microbial infection) Interacts with hepatitis C virus (HCV) proteins NS2 and E2. Interacts with NS2B from Japanese encephalitis virus (JEV), West Nile virus (WNV), and Zika virus (ZIKV). Post-translationally, may be phosphorylated.

It localises to the endoplasmic reticulum membrane. Functionally, component of the signal peptidase complex (SPC) which catalyzes the cleavage of N-terminal signal sequences from nascent proteins as they are translocated into the lumen of the endoplasmic reticulum. Dispensable for SPC enzymatic activity. In terms of biological role, (Microbial infection) Required for the post-translational processing of proteins involved in virion assembly and secretion from flaviviruses such as West Nile virus (WNV), Japanese encephalitis virus (JEV), Dengue virus type 2 (DENV-2), Yellow Fever virus (YFV), Zika virus (ZIKV) and hepatitis C virus (HCV). Plays a key role in the post-translational processing of flaviviral structural proteins prM, E, and NS1. In HCV, it is involved in virion assembly where it promotes the interaction between HCV virus proteins NS2 and E2. In Homo sapiens (Human), this protein is Signal peptidase complex subunit 1 (SPCS1).